We begin with the raw amino-acid sequence, 99 residues long: U1-theraphotoxin-Lsp1a (99 aa).

The first 23 residues, 1-23 (MRSLTLAALLLCSLLLVFHTSAA), serve as a signal peptide directing secretion. Residues 24 to 50 (AELEAQEGHLMIPGDTDTALETVDDER) constitute a propeptide that is removed on maturation. Intrachain disulfides connect Cys-54/Cys-67, Cys-58/Cys-91, Cys-72/Cys-74, and Cys-85/Cys-96.

It belongs to the neurotoxin 12 (Hwtx-2) family. 04 (lasiotoxin) subfamily. Expressed by the venom gland.

It is found in the secreted. In terms of biological role, toxin that causes irreversible contractile paralysis into adult Aedes aegypti resulting in 100% mortality after 24 hours. This Lasiodora sp. (strain IBSP 8539) (Brazilian salmon pink birdeater) protein is U1-theraphotoxin-Lsp1a.